A 244-amino-acid polypeptide reads, in one-letter code: Mannose-binding protein C (244 aa).

Positions 1 to 18 (MSLFTSFLLLCVLTAVYA) are cleaved as a signal peptide. Residues 38–96 (GLNGFPGKDGHDGAKGEKGEPGQGLRGLQGPPGKVGPAGPPGNPGSKGATGPKGDRGES) enclose the Collagen-like domain. Residue Pro43 is modified to 4-hydroxyproline. Residues 43–99 (PGKDGHDGAKGEKGEPGQGLRGLQGPPGKVGPAGPPGNPGSKGATGPKGDRGESVEF) form a disordered region. A compositionally biased stretch (basic and acidic residues) spans 45 to 57 (KDGHDGAKGEKGE). Pro58, Pro69, Pro78, and Pro81 each carry 4-hydroxyproline. The span at 65–74 (LQGPPGKVGP) shows a compositional bias: low complexity. A coiled-coil region spans residues 108–126 (IAALRSELRAMRKWVLLSM). The C-type lectin domain occupies 129–241 (NVGKKYFMSS…CSDSFLVVCE (113 aa)). Disulfide bonds link Cys151–Cys240 and Cys218–Cys232.

In terms of assembly, oligomeric complex of 3 or more homotrimers. Interacts with MASP1 and MASP2. Interacts with MEP1A and MEP1B and may inhibit their catalytic activity.

Its subcellular location is the secreted. Functionally, calcium-dependent lectin involved in innate immune defense. Binds mannose, fucose and N-acetylglucosamine on different microorganisms and activates the lectin complement pathway. Binds to late apoptotic cells, as well as to apoptotic blebs and to necrotic cells, but not to early apoptotic cells, facilitating their uptake by macrophages. The protein is Mannose-binding protein C (Mbl2) of Rattus norvegicus (Rat).